A 322-amino-acid polypeptide reads, in one-letter code: Gluconeogenesis factor (322 aa).

NAD(+) contacts are provided by residues threonine 13, 217 to 219, 263 to 267, and 300 to 301; these read NVM, KYAKE, and RH.

This sequence belongs to the gluconeogenesis factor family.

The protein resides in the cytoplasm. Required for morphogenesis under gluconeogenic growth conditions. The sequence is that of Gluconeogenesis factor from Halalkalibacterium halodurans (strain ATCC BAA-125 / DSM 18197 / FERM 7344 / JCM 9153 / C-125) (Bacillus halodurans).